Consider the following 415-residue polypeptide: Camphor 5-monooxygenase (415 aa).

Residue Cys-358 coordinates heme.

The protein belongs to the cytochrome P450 family. Heme serves as cofactor.

The protein resides in the cytoplasm. It carries out the reaction 2 reduced [2Fe-2S]-[putidaredoxin] + (1R,4R)-camphor + O2 + 2 H(+) = (1R,4R,5R)-5-hydroxycamphor + 2 oxidized [2Fe-2S]-[putidaredoxin] + H2O. Its pathway is terpene metabolism; (R)-camphor degradation. Its function is as follows. Involved in a camphor oxidation system. The polypeptide is Camphor 5-monooxygenase (camC) (Pseudomonas putida (Arthrobacter siderocapsulatus)).